The sequence spans 255 residues: Poxin (255 aa).

It belongs to the poxin family. Highly divergent.

The enzyme catalyses 2',3'-cGAMP + H2O = Gp(2'-5')Ap(3') + H(+). Functionally, nuclease that cleaves 2',3'-cGAMP. The polypeptide is Poxin (Bombyx mori (Silk moth)).